The primary structure comprises 159 residues: Transcription elongation factor GreA (159 aa).

It belongs to the GreA/GreB family.

Necessary for efficient RNA polymerase transcription elongation past template-encoded arresting sites. The arresting sites in DNA have the property of trapping a certain fraction of elongating RNA polymerases that pass through, resulting in locked ternary complexes. Cleavage of the nascent transcript by cleavage factors such as GreA or GreB allows the resumption of elongation from the new 3'terminus. GreA releases sequences of 2 to 3 nucleotides. The polypeptide is Transcription elongation factor GreA (Buchnera aphidicola subsp. Cinara cedri (strain Cc)).